Consider the following 234-residue polypeptide: Sugar fermentation stimulation protein homolog (234 aa).

The protein belongs to the SfsA family.

This chain is Sugar fermentation stimulation protein homolog, found in Shewanella baltica (strain OS155 / ATCC BAA-1091).